The following is a 140-amino-acid chain: Nucleoside diphosphate kinase (140 aa).

Positions 11, 59, 87, 93, 104, and 114 each coordinate ATP. The active-site Pros-phosphohistidine intermediate is the His-117.

It belongs to the NDK family. Homotetramer. Mg(2+) serves as cofactor.

It is found in the cytoplasm. It carries out the reaction a 2'-deoxyribonucleoside 5'-diphosphate + ATP = a 2'-deoxyribonucleoside 5'-triphosphate + ADP. The enzyme catalyses a ribonucleoside 5'-diphosphate + ATP = a ribonucleoside 5'-triphosphate + ADP. Major role in the synthesis of nucleoside triphosphates other than ATP. The ATP gamma phosphate is transferred to the NDP beta phosphate via a ping-pong mechanism, using a phosphorylated active-site intermediate. This chain is Nucleoside diphosphate kinase, found in Francisella tularensis subsp. holarctica (strain LVS).